A 503-amino-acid chain; its full sequence is Protein O-glucosyltransferase 3 (503 aa).

The first 19 residues, 1–19 (MQALPLGLQLALLVAAGAG), serve as a signal peptide directing secretion. A Filamin repeat occupies 19-129 (GARVSAPRSL…VAHSPYILKG (111 aa)). Residues asparagine 56 and asparagine 302 are each glycosylated (N-linked (GlcNAc...) asparagine). A Prevents secretion from ER motif is present at residues 500 to 503 (REEL).

It belongs to the KDELC family.

It is found in the endoplasmic reticulum lumen. It catalyses the reaction L-seryl-[EGF-like domain protein] + UDP-alpha-D-glucose = 3-O-(beta-D-glucosyl)-L-seryl-[EGF-like domain protein] + UDP + H(+). It carries out the reaction L-seryl-[EGF-like domain protein] + UDP-alpha-D-xylose = 3-O-(beta-D-xylosyl)-L-seryl-[EGF-like domain protein] + UDP + H(+). It functions in the pathway protein modification; protein glycosylation. Protein glucosyltransferase that catalyzes the transfer of glucose from UDP-glucose to a serine residue within the consensus sequence peptide C-X-N-T-X-G-S-F-X-C. Can also catalyze the transfer of xylose from UDP-xylose but less efficiently. Specifically targets extracellular EGF repeats of proteins such as NOTCH1, NOTCH3, FBN1, FBN2 and LTBP1. May regulate the transport of NOTCH1 and NOTCH3 to the plasma membrane and thereby the Notch signaling pathway. In Mus musculus (Mouse), this protein is Protein O-glucosyltransferase 3 (Poglut3).